Reading from the N-terminus, the 129-residue chain is MTCTLRWTITALVLLGICHLARPAFRTKCGRYSYCWIPYDIERDRYDNGDKKCCFCRNAWSPWQCKEDERYEWLRCGHKFYYMCCYTDDDNGNGNGNGNGFNYLKSLYGGYGNGNGEFWEEYIDERYDK.

A signal peptide spans 1–23 (MTCTLRWTITALVLLGICHLARP). A run of 5 repeats spans residues 91–92 (NG), 93–94 (NG), 95–96 (NG), 97–98 (NG), and 99–100 (NG). A 5 X 2 AA tandem repeats of N-G region spans residues 91–100 (NGNGNGNGNG).

Belongs to the N16 matrix protein family. Heterooligomer; disulfide-linked. Pif97, Pif80, N16 and other proteins form a complex. In terms of tissue distribution, component of conchiolin, the organic matrix of nacre. Specifically expressed in mantle epithelium.

It localises to the secreted. The protein resides in the extracellular space. It is found in the extracellular matrix. In terms of biological role, may be specifically involved in the formation of the nacreous layer. This is N16.5 matrix protein from Pinctada fucata (Akoya pearl oyster).